The primary structure comprises 232 residues: Large ribosomal subunit protein uL1 (232 aa).

Belongs to the universal ribosomal protein uL1 family. As to quaternary structure, part of the 50S ribosomal subunit.

Its function is as follows. Binds directly to 23S rRNA. The L1 stalk is quite mobile in the ribosome, and is involved in E site tRNA release. In terms of biological role, protein L1 is also a translational repressor protein, it controls the translation of the L11 operon by binding to its mRNA. The chain is Large ribosomal subunit protein uL1 from Bartonella bacilliformis (strain ATCC 35685 / KC583 / Herrer 020/F12,63).